The chain runs to 498 residues: Inosine-5'-monophosphate dehydrogenase (498 aa).

CBS domains follow at residues 98-155 and 159-216; these read MVVN…EQKI and MTRE…PHAS. Residues Asp-253 and 303–305 each bind NAD(+); that span reads GIG. The K(+) site is built by Gly-305 and Gly-307. Ser-308 contributes to the IMP binding site. Residue Cys-310 participates in K(+) binding. Cys-310 acts as the Thioimidate intermediate in catalysis. IMP contacts are provided by residues 343 to 345, 366 to 367, and 390 to 394; these read DGG, GS, and YRGMG. Arg-406 functions as the Proton acceptor in the catalytic mechanism. Glu-421 contributes to the IMP binding site. K(+)-binding residues include Glu-475, Ser-476, and His-477.

This sequence belongs to the IMPDH/GMPR family. Homotetramer. The cofactor is K(+).

It carries out the reaction IMP + NAD(+) + H2O = XMP + NADH + H(+). The protein operates within purine metabolism; XMP biosynthesis via de novo pathway; XMP from IMP: step 1/1. With respect to regulation, mycophenolic acid (MPA) is a non-competitive inhibitor that prevents formation of the closed enzyme conformation by binding to the same site as the amobile flap. In contrast, mizoribine monophosphate (MZP) is a competitive inhibitor that induces the closed conformation. MPA is a potent inhibitor of mammalian IMPDHs but a poor inhibitor of the bacterial enzymes. MZP is a more potent inhibitor of bacterial IMPDH. Catalyzes the conversion of inosine 5'-phosphate (IMP) to xanthosine 5'-phosphate (XMP), the first committed and rate-limiting step in the de novo synthesis of guanine nucleotides, and therefore plays an important role in the regulation of cell growth. The sequence is that of Inosine-5'-monophosphate dehydrogenase from Rhizobium tropici.